The primary structure comprises 176 residues: NAD(P)H-quinone oxidoreductase subunit 6, chloroplastic (176 aa).

5 consecutive transmembrane segments (helical) span residues 10 to 30 (FLLVFLGSGLILGGLGVVLLP), 32 to 52 (PIYSAFSLGLVLVCTSLFYIL), 61 to 81 (AQLLIYVGAINVLIIFAVMFM), 92 to 112 (LWTVGDGITSMVCISLFISLI), and 152 to 172 (FFLPFELISIILLVALIGAIA).

Belongs to the complex I subunit 6 family. As to quaternary structure, NDH is composed of at least 16 different subunits, 5 of which are encoded in the nucleus.

The protein resides in the plastid. It localises to the chloroplast thylakoid membrane. It carries out the reaction a plastoquinone + NADH + (n+1) H(+)(in) = a plastoquinol + NAD(+) + n H(+)(out). It catalyses the reaction a plastoquinone + NADPH + (n+1) H(+)(in) = a plastoquinol + NADP(+) + n H(+)(out). In terms of biological role, NDH shuttles electrons from NAD(P)H:plastoquinone, via FMN and iron-sulfur (Fe-S) centers, to quinones in the photosynthetic chain and possibly in a chloroplast respiratory chain. The immediate electron acceptor for the enzyme in this species is believed to be plastoquinone. Couples the redox reaction to proton translocation, and thus conserves the redox energy in a proton gradient. The sequence is that of NAD(P)H-quinone oxidoreductase subunit 6, chloroplastic (ndhG) from Nicotiana tabacum (Common tobacco).